The chain runs to 173 residues: Lipoprotein signal peptidase (173 aa).

Transmembrane regions (helical) follow at residues 9–29 (LPFL…ILVV), 37–57 (VIPV…GAAF), and 70–90 (ILLV…YLKS). Residues Asp124 and Asp146 contribute to the active site. Residues 142 to 162 (FNAADSFIVCCGIGLGVNLIL) traverse the membrane as a helical segment.

Belongs to the peptidase A8 family.

The protein localises to the cell inner membrane. It carries out the reaction Release of signal peptides from bacterial membrane prolipoproteins. Hydrolyzes -Xaa-Yaa-Zaa-|-(S,diacylglyceryl)Cys-, in which Xaa is hydrophobic (preferably Leu), and Yaa (Ala or Ser) and Zaa (Gly or Ala) have small, neutral side chains.. It functions in the pathway protein modification; lipoprotein biosynthesis (signal peptide cleavage). Functionally, this protein specifically catalyzes the removal of signal peptides from prolipoproteins. The polypeptide is Lipoprotein signal peptidase (Treponema denticola (strain ATCC 35405 / DSM 14222 / CIP 103919 / JCM 8153 / KCTC 15104)).